A 194-amino-acid chain; its full sequence is uncharacterized protein (194 aa).

The N-terminal stretch at 1–22 (MNKVTKTAIAGLLALFAGNAAA) is a signal peptide. C38 and C78 are oxidised to a cystine.

The protein belongs to the fimbrial protein family.

The protein localises to the fimbrium. Functionally, part of the yraHIJK fimbrial operon. Could contribute to adhesion to various surfaces in specific environmental niches. Increases adhesion to eukaryotic T24 bladder epithelial cells in the absence of fim operon. This is an uncharacterized protein from Escherichia coli (strain K12).